We begin with the raw amino-acid sequence, 373 residues long: Filamin-binding LIM protein 1 (373 aa).

The tract at residues 1-70 is filamin-binding; sequence MASKPEKRVA…SPWTTPGRAA (70 aa). Disordered regions lie at residues 41 to 119 and 135 to 176; these read RPWE…PSEE and QLHL…PVEK. Positions 104–114 are enriched in pro residues; the sequence is LPPPPPPPPVL. 3 LIM zinc-binding domains span residues 181–242, 243–300, and 301–370; these read DICA…TLER, CGKC…RKFA, and PVCS…RSAA. The segment at 276-373 is FERMT2-binding; the sequence is IGDESFALGS…HVKRSAAGCC (98 aa).

Interacts with NKX2-5. Isoform 1 and isoform 3 interact with FERMT2, FLNA, FLNB and FLNC. Isoform 2 interacts with FLNB. As to expression, isoform 1 and isoform 3 are expressed in heart, kidney, lung, pancreas, placenta and platelets. Isoform 2 is expressed in brain, heart, kidney, lung, pancreas, placenta, skeletal muscle and platelets.

The protein localises to the cell junction. It is found in the focal adhesion. It localises to the cytoplasm. The protein resides in the cytoskeleton. Its subcellular location is the stress fiber. In terms of biological role, serves as an anchoring site for cell-ECM adhesion proteins and filamin-containing actin filaments. Is implicated in cell shape modulation (spreading) and motility. May participate in the regulation of filamin-mediated cross-linking and stabilization of actin filaments. May also regulate the assembly of filamin-containing signaling complexes that control actin assembly. Promotes dissociation of FLNA from ITGB3 and ITGB7. Promotes activation of integrins and regulates integrin-mediated cell-cell adhesion. The polypeptide is Filamin-binding LIM protein 1 (FBLIM1) (Homo sapiens (Human)).